A 123-amino-acid polypeptide reads, in one-letter code: Large ribosomal subunit protein bL12 (123 aa).

It belongs to the bacterial ribosomal protein bL12 family. As to quaternary structure, homodimer. Part of the ribosomal stalk of the 50S ribosomal subunit. Forms a multimeric L10(L12)X complex, where L10 forms an elongated spine to which 2 to 4 L12 dimers bind in a sequential fashion. Binds GTP-bound translation factors.

In terms of biological role, forms part of the ribosomal stalk which helps the ribosome interact with GTP-bound translation factors. Is thus essential for accurate translation. The polypeptide is Large ribosomal subunit protein bL12 (Neisseria gonorrhoeae (strain NCCP11945)).